The primary structure comprises 89 residues: UPF0237 protein DIP1286 (89 aa).

Positions 4–78 (IISVTGADHT…KDQNLVIRIQ (75 aa)) constitute an ACT domain.

Belongs to the UPF0237 family.

The protein is UPF0237 protein DIP1286 of Corynebacterium diphtheriae (strain ATCC 700971 / NCTC 13129 / Biotype gravis).